Here is a 201-residue protein sequence, read N- to C-terminus: MEEKNHIYPIFDRMMTREDKEELLGQHSVMIWFTGLSGSGKSTIAIALERELHKRGLLCRILDGDNIRSGINNNLGFSETDRVENIRRIAEVSKLFLDSGIITIAAFISPNNDIREMAANIIGKDDFLEVFVSTPLEECEKRDVKGLYAKARKGEIQNFTGISAPFEVPEHPALALDTSKLSLEESVNRLLEMVLPKIEKK.

ATP is bound at residue Gly-35–Ser-42. Residue Ser-109 is the Phosphoserine intermediate of the active site.

This sequence belongs to the APS kinase family.

The enzyme catalyses adenosine 5'-phosphosulfate + ATP = 3'-phosphoadenylyl sulfate + ADP + H(+). It participates in sulfur metabolism; hydrogen sulfide biosynthesis; sulfite from sulfate: step 2/3. In terms of biological role, catalyzes the synthesis of activated sulfate. In Bacteroides thetaiotaomicron (strain ATCC 29148 / DSM 2079 / JCM 5827 / CCUG 10774 / NCTC 10582 / VPI-5482 / E50), this protein is Adenylyl-sulfate kinase.